We begin with the raw amino-acid sequence, 388 residues long: MNLHEYQGKQLFAEYGLPVSKGYAVDTPEAAAEACDKIGGTEWVVKAQVHAGGRGKAGGVKLVRSKEDAAAFAQQWLGKRLVTYQTDANGQPVTKILVESCTDIAKELYLGAVVDRSSRRIVFMASTEGGVDIEKIAHDTPEKILKATIDPLVGAQPFQGRDLAFQLGLEGKQVTQFAKIFTGLAKLFQDHDLALLEVNPLVIKADGDLHCLDAKINIDANAMYRQPKLKGFHDPSQDDPREAHAAKFELNYVALEGNIGCMVNGAGLAMGTMDIVNLHGGKPANFLDVGGGATKERVTEAFKIILSDANVAAVLVNIFGGIVRCDMIAEGIIGAVKEVGVKIPVVVRLEGNNAELGAKVLAESGLNIIAATSLTDAAQQVVKAAEGK.

Residues 9–244 enclose the ATP-grasp domain; the sequence is KQLFAEYGLP…PSQDDPREAH (236 aa). ATP-binding positions include K46, 53–55, E99, T102, and E107; that span reads GRG. Residues N199 and D213 each coordinate Mg(2+). Substrate-binding positions include N264 and 321–323; that span reads GIV.

The protein belongs to the succinate/malate CoA ligase beta subunit family. As to quaternary structure, heterotetramer of two alpha and two beta subunits. Requires Mg(2+) as cofactor.

The enzyme catalyses succinate + ATP + CoA = succinyl-CoA + ADP + phosphate. It catalyses the reaction GTP + succinate + CoA = succinyl-CoA + GDP + phosphate. Its pathway is carbohydrate metabolism; tricarboxylic acid cycle; succinate from succinyl-CoA (ligase route): step 1/1. In terms of biological role, succinyl-CoA synthetase functions in the citric acid cycle (TCA), coupling the hydrolysis of succinyl-CoA to the synthesis of either ATP or GTP and thus represents the only step of substrate-level phosphorylation in the TCA. The beta subunit provides nucleotide specificity of the enzyme and binds the substrate succinate, while the binding sites for coenzyme A and phosphate are found in the alpha subunit. The polypeptide is Succinate--CoA ligase [ADP-forming] subunit beta (Pseudomonas syringae pv. syringae (strain B728a)).